Here is a 242-residue protein sequence, read N- to C-terminus: ATP synthase subunit a (242 aa).

The next 7 membrane-spanning stretches (helical) occupy residues 23–43, 62–82, 84–104, 113–133, 143–163, 176–196, and 201–221; these read ISFTNCALFMILASLVSAVLL, VELIYNFVVGAIESNAGVGGL, YIPFVLSIFLFVLACNIIGIL, HVSVTLALSVVVCASVTVLGF, IFLPEGTPLWLAPMMVFIKLF, LAANMIAGHTIIAVIAEFVLK, and LAPLPFAFIMVLIAFEIFVAI.

The protein belongs to the ATPase A chain family. As to quaternary structure, F-type ATPases have 2 components, CF(1) - the catalytic core - and CF(0) - the membrane proton channel. CF(1) has five subunits: alpha(3), beta(3), gamma(1), delta(1), epsilon(1). CF(0) has three main subunits: a(1), b(2) and c(9-12). The alpha and beta chains form an alternating ring which encloses part of the gamma chain. CF(1) is attached to CF(0) by a central stalk formed by the gamma and epsilon chains, while a peripheral stalk is formed by the delta and b chains.

Its subcellular location is the cell inner membrane. Key component of the proton channel; it plays a direct role in the translocation of protons across the membrane. The protein is ATP synthase subunit a of Anaplasma phagocytophilum (strain HZ).